The following is a 310-amino-acid chain: Putative S-adenosyl-L-methionine-dependent methyltransferase MAP_2076c (310 aa).

S-adenosyl-L-methionine-binding positions include Asp131 and 160 to 161 (DL).

This sequence belongs to the UPF0677 family.

Exhibits S-adenosyl-L-methionine-dependent methyltransferase activity. The protein is Putative S-adenosyl-L-methionine-dependent methyltransferase MAP_2076c of Mycolicibacterium paratuberculosis (strain ATCC BAA-968 / K-10) (Mycobacterium paratuberculosis).